The sequence spans 415 residues: Maltose excess protein 1, chloroplastic (415 aa).

Residues 74–93 (SESDSDSDFPHENQQGNPGL) form a disordered region. Helical transmembrane passes span 139–159 (ALSAVPWLGMLTGLLGNLSLL), 176–196 (LGVVSTHIVLAQLTMAEAMPI), 199–219 (FVATSAVVTIGLIVNCLYYFG), 231–251 (DVITIGGLSVLPQIMWSTFVP), 252–272 (LVPNSILPGTTAFGIAVAAII), 286–306 (FVGSLSGWTATLMFMWMPVSQ), 322–342 (SITMLLSMMGNGLMIPRALFI), 345–365 (LMWLTGSLWATLFYGYGNILC), and 373–393 (SQSFFVAATIGLISWIGLALW).

Expressed in leaves and roots. Expressed in root cap cells.

The protein resides in the plastid. The protein localises to the chloroplast inner membrane. Its function is as follows. Probable maltose transporter. Essential for the conversion of starch to sucrose in leaves at night, probably via the export of maltose from the chloroplast. Required for root cap cells formation. The sequence is that of Maltose excess protein 1, chloroplastic (MEX1) from Arabidopsis thaliana (Mouse-ear cress).